Consider the following 348-residue polypeptide: 3-methyl-2-oxobutanoate dehydrogenase subunit beta (348 aa).

Thiamine diphosphate contacts are provided by residues Glu-51, 80 to 82 (LAE), Gln-104, and 108 to 111 (FSYP). Substrate is bound by residues 105-108 (FDGF) and His-151. His-151 acts as the Proton acceptor in catalysis.

In terms of assembly, heteromer of E1 alpha (BkdA) and beta (BkdB) subunits. Part of the BCKADH complex, consisting of multiple copies of BkdA/BkdB (E1), BkdC (E2) and Lpd (E3). Thiamine diphosphate is required as a cofactor.

It carries out the reaction N(6)-[(R)-lipoyl]-L-lysyl-[protein] + 3-methyl-2-oxobutanoate + H(+) = N(6)-[(R)-S(8)-2-methylpropanoyldihydrolipoyl]-L-lysyl-[protein] + CO2. Its function is as follows. Component of the branched-chain alpha-ketoacid dehydrogenase (BCKADH) complex, that catalyzes the overall conversion of branched-chain alpha-ketoacids to acyl-CoA and CO(2). The chain is 3-methyl-2-oxobutanoate dehydrogenase subunit beta (bkdB) from Mycobacterium tuberculosis (strain CDC 1551 / Oshkosh).